Here is a 261-residue protein sequence, read N- to C-terminus: tRNA pseudouridine synthase A (261 aa).

Residue Asp53 is the Nucleophile of the active site. Tyr111 is a binding site for substrate.

It belongs to the tRNA pseudouridine synthase TruA family. In terms of assembly, homodimer.

It carries out the reaction uridine(38/39/40) in tRNA = pseudouridine(38/39/40) in tRNA. Its function is as follows. Formation of pseudouridine at positions 38, 39 and 40 in the anticodon stem and loop of transfer RNAs. In Shouchella clausii (strain KSM-K16) (Alkalihalobacillus clausii), this protein is tRNA pseudouridine synthase A.